Reading from the N-terminus, the 447-residue chain is Adenylosuccinate synthetase (447 aa).

GTP-binding positions include 35–41 and 63–65; these read GDEGKGK and GHT. Asp36 acts as the Proton acceptor in catalysis. 2 residues coordinate Mg(2+): Asp36 and Gly63. IMP-binding positions include 36–39, 61–64, Thr153, Arg167, Asn245, Thr260, and Arg324; these read DEGK and NAGH. The Proton donor role is filled by His64. A substrate-binding site is contributed by 320-326; it reads VTTKRKR. GTP contacts are provided by residues Arg326, 352–354, and 435–437; these read KLD and GVG.

This sequence belongs to the adenylosuccinate synthetase family. As to quaternary structure, homodimer. Requires Mg(2+) as cofactor.

The protein resides in the cytoplasm. It catalyses the reaction IMP + L-aspartate + GTP = N(6)-(1,2-dicarboxyethyl)-AMP + GDP + phosphate + 2 H(+). Its pathway is purine metabolism; AMP biosynthesis via de novo pathway; AMP from IMP: step 1/2. In terms of biological role, plays an important role in the de novo pathway and in the salvage pathway of purine nucleotide biosynthesis. Catalyzes the first committed step in the biosynthesis of AMP from IMP. Plays a role in the regulation of adult life span. The chain is Adenylosuccinate synthetase from Drosophila melanogaster (Fruit fly).